The primary structure comprises 301 residues: Acetyl-coenzyme A carboxylase carboxyl transferase subunit beta (301 aa).

The CoA carboxyltransferase N-terminal domain maps to 25–294 (LWIKCPETGE…SAANDVTRGA (270 aa)).

Belongs to the AccD/PCCB family. As to quaternary structure, acetyl-CoA carboxylase is a heterohexamer composed of biotin carboxyl carrier protein (AccB), biotin carboxylase (AccC) and two subunits each of ACCase subunit alpha (AccA) and ACCase subunit beta (AccD).

It localises to the cytoplasm. It carries out the reaction N(6)-carboxybiotinyl-L-lysyl-[protein] + acetyl-CoA = N(6)-biotinyl-L-lysyl-[protein] + malonyl-CoA. It functions in the pathway lipid metabolism; malonyl-CoA biosynthesis; malonyl-CoA from acetyl-CoA: step 1/1. Its function is as follows. Component of the acetyl coenzyme A carboxylase (ACC) complex. Biotin carboxylase (BC) catalyzes the carboxylation of biotin on its carrier protein (BCCP) and then the CO(2) group is transferred by the transcarboxylase to acetyl-CoA to form malonyl-CoA. The sequence is that of Acetyl-coenzyme A carboxylase carboxyl transferase subunit beta from Rhizobium etli (strain ATCC 51251 / DSM 11541 / JCM 21823 / NBRC 15573 / CFN 42).